A 244-amino-acid chain; its full sequence is Centromere protein H (244 aa).

N-acetylmethionine is present on Met1. Residues 1–33 (METQSEEQAVTKPADSGGEGGPPQVAGAQAARP) are disordered. Ser16 carries the phosphoserine modification. A compositionally biased stretch (low complexity) spans 22–31 (PPQVAGAQAA). Lys64 is covalently cross-linked (Glycyl lysine isopeptide (Lys-Gly) (interchain with G-Cter in SUMO2)). Thr65 is modified (phosphothreonine). Coiled coils occupy residues 66–104 (PEQIMQEKQIEAKIEELENEVEEAKTAFEMKKLALDRMQ) and 146–189 (DLEE…MENS).

This sequence belongs to the CENP-H/MCM16 family. Self-associates. Component of the CENPA-NAC complex, at least composed of CENPA, CENPC, CENPH, CENPM, CENPN, CENPT and CENPU. The CENPA-NAC complex interacts with the CENPA-CAD complex, composed of CENPI, CENPK, CENPL, CENPO, CENPP, CENPQ, CENPR and CENPS. Interacts with KIF2C and NDC80.

It is found in the nucleus. Its subcellular location is the chromosome. It localises to the centromere. The protein resides in the kinetochore. Its function is as follows. Component of the CENPA-NAC (nucleosome-associated) complex, a complex that plays a central role in assembly of kinetochore proteins, mitotic progression and chromosome segregation. The CENPA-NAC complex recruits the CENPA-CAD (nucleosome distal) complex and may be involved in incorporation of newly synthesized CENPA into centromeres. This is Centromere protein H (CENPH) from Bos taurus (Bovine).